Reading from the N-terminus, the 497-residue chain is Acetyltransferase FGR3 (497 aa).

D221 and I224 together coordinate Ca(2+). K255 and D303 together coordinate CoA. D386 is a binding site for Ca(2+). T396 lines the CoA pocket. A Ca(2+)-binding site is contributed by D462. The interval 477-497 (DASEAKKANGTNGTNGVNGSS) is disordered. Residues 485–497 (NGTNGTNGVNGSS) are compositionally biased toward low complexity.

The protein belongs to the trichothecene 3-O-acetyltransferase family.

Its pathway is secondary metabolite biosynthesis. In terms of biological role, acetyltransferase; part of the gene cluster that mediates the biosynthesis of the tetraketides fugralins such as linear fugralin A and cyclic fugralin B, volatile compounds that play a role in the asexual reproductive cycle but are not involved in pathogenicity. One of the key features of fugralins is the presence of a double methyl group, which is only rarely encountered in fungal secondary metabolites. As the fugralins cluster does not contain an independent methyltransferase, the PKS FGR1 is probably responsible for adding two methyl groups to the same carbon atom. Fugralin B is similar to fugralin A except for a cyclization between the carboxylic acid C-8 and the alcohol on C-4 resulting in a six membered lactone ring, probably catalyzed by the cyclase FGR4. The exact role of the individual cluster genes remains unknown and further work is needed to unravel the biosynthetic pathway. The polypeptide is Acetyltransferase FGR3 (Gibberella zeae (strain ATCC MYA-4620 / CBS 123657 / FGSC 9075 / NRRL 31084 / PH-1) (Wheat head blight fungus)).